The sequence spans 360 residues: Type II methyltransferase M2.ScrFI (360 aa).

Residues 2 to 360 (LRVFEAFAGY…SLFKELFKSQ (359 aa)) enclose the SAM-dependent MTase C5-type domain. Cys127 is an active-site residue.

The protein belongs to the class I-like SAM-binding methyltransferase superfamily. C5-methyltransferase family.

It carries out the reaction a 2'-deoxycytidine in DNA + S-adenosyl-L-methionine = a 5-methyl-2'-deoxycytidine in DNA + S-adenosyl-L-homocysteine + H(+). A methylase, recognizes the double-stranded sequence 5'-CCNGG-3', methylates C-2 on both strands, and protects the DNA from cleavage by the ScrFI endonuclease. This is Type II methyltransferase M2.ScrFI (scrFIBM) from Lactococcus lactis subsp. cremoris (Streptococcus cremoris).